Reading from the N-terminus, the 291-residue chain is Undecaprenyl-diphosphatase (291 aa).

8 helical membrane passes run 1–21, 48–68, 99–119, 123–143, 159–179, 200–220, 236–256, and 269–289; these read MLIL…LTEF, SAFT…AWVF, LHII…DDVI, LFSV…MIIA, INYF…WPGF, SDFT…LSLV, LGFL…LYLI, and IVLV…QGIT.

This sequence belongs to the UppP family.

The protein resides in the cell membrane. The enzyme catalyses di-trans,octa-cis-undecaprenyl diphosphate + H2O = di-trans,octa-cis-undecaprenyl phosphate + phosphate + H(+). Functionally, catalyzes the dephosphorylation of undecaprenyl diphosphate (UPP). Confers resistance to bacitracin. The sequence is that of Undecaprenyl-diphosphatase from Staphylococcus saprophyticus subsp. saprophyticus (strain ATCC 15305 / DSM 20229 / NCIMB 8711 / NCTC 7292 / S-41).